The primary structure comprises 576 residues: CDPK-related kinase 1 (576 aa).

The disordered stretch occupies residues 1-39; it reads MGICHGKPVEQQSKSLPVSGETNEAPTNSQPPAKSSGFP. Gly-2 carries N-myristoyl glycine lipidation. Over residues 10-33 the composition is skewed to polar residues; it reads EQQSKSLPVSGETNEAPTNSQPPA. The Protein kinase domain maps to 123 to 385; sequence YEIDGEVGRG…AAQALCHPWL (263 aa). Residues 129-137 and Lys-155 each bind ATP; that span reads VGRGHFGYT. Residue Asp-251 is the Proton acceptor of the active site. At Ser-291 the chain carries Phosphoserine. Phosphoserine; by CPK1 and CPK34 is present on Ser-333. The autoinhibitory domain stretch occupies residues 390-420; it reads ELKIPSDMIIYKLVKVYIMSTSLRKSALAAL. A calmodulin binding (CaMBD) region spans residues 409–429; that stretch reads STSLRKSALAALAKTLTVPQL. EF-hand domains follow at residues 427–463, 464–499, 500–539, and 542–571; these read PQLAYLREQFTLLGPSKNGYISMQNYKTAILKSSTDA, MKDSRVFDFVHMISCLQYKKLDFEEFCASALSVYQL, EAMETWEQHARRAYELFEKDGNRPIMIEELASELGLGPSV, and HVVLQDWIRHSDGKLSFLGFVRLLHGVSSR. Ca(2+)-binding residues include Ser-442, Asn-444, Tyr-446, Lys-483, Glu-488, Asp-519, Asn-521, Glu-528, Asp-553, and Lys-555. The residue at position 557 (Ser-557) is a Phosphoserine.

This sequence belongs to the protein kinase superfamily. Ser/Thr protein kinase family. CDPK subfamily. As to quaternary structure, binds calmodulin (CaM) in a calcium-dependent manner. Interacts with HSFA1A. In terms of processing, autophosphorylated.

Its subcellular location is the membrane. It catalyses the reaction L-seryl-[protein] + ATP = O-phospho-L-seryl-[protein] + ADP + H(+). The catalysed reaction is L-threonyl-[protein] + ATP = O-phospho-L-threonyl-[protein] + ADP + H(+). Its activity is regulated as follows. Activated by calcium and calmodulin. Autophosphorylation may play an important role in the regulation of the kinase activity. Functionally, may play a role in signal transduction pathways that involve calcium as a second messenger. Serine/threonine kinase that phosphorylates histone H3. Confers thermotolerance; involved in the heat-shock-mediated calmodulin-dependent signal transduction leading to the activation of heat-shock transcription factors (HSFs); phosphorylates HSFA1A. In Arabidopsis thaliana (Mouse-ear cress), this protein is CDPK-related kinase 1 (CRK1).